A 352-amino-acid chain; its full sequence is DNA polymerase IV (352 aa).

In terms of domain architecture, UmuC spans 4–185 (IIHVDMDCFF…LPLSKIPGVG (182 aa)). The Mg(2+) site is built by D8 and D103. Residue E104 is part of the active site.

Belongs to the DNA polymerase type-Y family. In terms of assembly, monomer. Mg(2+) is required as a cofactor.

It is found in the cytoplasm. The catalysed reaction is DNA(n) + a 2'-deoxyribonucleoside 5'-triphosphate = DNA(n+1) + diphosphate. Poorly processive, error-prone DNA polymerase involved in untargeted mutagenesis. Copies undamaged DNA at stalled replication forks, which arise in vivo from mismatched or misaligned primer ends. These misaligned primers can be extended by PolIV. Exhibits no 3'-5' exonuclease (proofreading) activity. May be involved in translesional synthesis, in conjunction with the beta clamp from PolIII. The sequence is that of DNA polymerase IV from Yersinia enterocolitica serotype O:8 / biotype 1B (strain NCTC 13174 / 8081).